The following is a 585-amino-acid chain: MAGUK p55 subfamily member 3 (585 aa).

L27 domains lie at 6–60 (EDSG…ERQS) and 61–118 (PTPV…FDPV). Positions 137-218 (IVRLVKNKEP…SITLKIIPAT (82 aa)) constitute a PDZ domain. One can recognise an SH3 domain in the interval 226 to 296 (ESKVFMRALF…PSKQFQERRL (71 aa)). Position 307 is a phosphoserine (Ser-307). Positions 385-570 (SRLVVLIGSL…VCSQLRAVIE (186 aa)) constitute a Guanylate kinase-like domain. The segment at 510–530 (KRKTPPVSPDSEDPATPLDEQ) is disordered.

Belongs to the MAGUK family. In terms of assembly, interacts with HTR2C; this interaction stabilizes the receptor at the plasma membrane and prevents the desensitization of the HTR2C receptor-mediated calcium response. Interacts with HTR2A. Interacts with HTR4. Interacts (via PDZ domain) with CADM1 (via C-terminus)Interacts (via PDZ domain) with CADM1; this interaction connects CADM1 with DLG1. Interacts (via Guanylate kinase-like domain) with PALS1. Interacts with DLG1 (via N-terminus); this interaction connects CADM1 with DLG1 and links CADM1 with the regulatory subunit of phosphoinositide-3-kinase (PI3K) by forming a multiprotein complex and participates in cell spreading.

Its subcellular location is the apical cell membrane. It localises to the cell membrane. The protein resides in the cell junction. It is found in the adherens junction. Functionally, participates in cell spreading through the phosphoinositide-3-kinase (PI3K) pathway by connecting CADM1 to DLG1 and the regulatory subunit of phosphoinositide-3-kinase (PI3K). Stabilizes HTR2C at the plasma membrane and prevents its desensitization. May participates in the maintenance of adherens junctions. The protein is MAGUK p55 subfamily member 3 of Rattus norvegicus (Rat).